A 221-amino-acid chain; its full sequence is Oxaloacetate tautomerase FAHD1, mitochondrial (221 aa).

The transit peptide at 1–24 (MAASRPLSRFWEWGKNIVCVGRNY) directs the protein to the mitochondrion. At serine 37 the chain carries Phosphoserine. Mg(2+)-binding residues include glutamate 68, glutamate 70, and aspartate 99. The residue at position 110 (lysine 110) is an N6-acetyllysine. Lysine 112 carries the N6-succinyllysine modification.

Belongs to the FAH family. In terms of assembly, homodimer. The cofactor is Mg(2+). Mn(2+) serves as cofactor.

The protein resides in the mitochondrion. It localises to the cytoplasm. Its subcellular location is the cytosol. It catalyses the reaction oxaloacetate = enol-oxaloacetate. The enzyme catalyses oxaloacetate + H(+) = pyruvate + CO2. The catalysed reaction is a 3-acylpyruvate + H2O = a carboxylate + pyruvate + H(+). It carries out the reaction acetylpyruvate + H2O = acetate + pyruvate + H(+). It catalyses the reaction 3-fumarylpyruvate + H2O = fumarate + pyruvate + H(+). Oxaloacetate decarboxylation is competitively inhibited by oxalate. Functionally, tautomerase that converts enol-oxaloacetate, a strong inhibitor of succinate dehydrogenase, to the physiological keto form of oxaloacetate. It is thereby required to maximize aerobic respiration efficiency by preventing succinate dehydrogenase inhibition. Also acts as a weak oxaloacetate decarboxylase (ODx), catalyzing the decarboxylation of oxaloacetate (OAA) to pyruvate and CO(2), and as such is likely a regulatory enzyme in the TCA cycle. Also displays acylpyruvase activity, being able to hydrolyze acetylpyruvate and fumarylpyruvate in vitro. This is Oxaloacetate tautomerase FAHD1, mitochondrial (FAHD1) from Pongo abelii (Sumatran orangutan).